The chain runs to 846 residues: Selenocysteine insertion sequence-binding protein 2 (846 aa).

Composition is skewed to basic and acidic residues over residues R151–D165 and P206–F215. Disordered stretches follow at residues R151–S246, T266–L288, T321–Q440, A448–V467, and V475–T613. S220 carries the post-translational modification Phosphoserine. Polar residues-rich tracts occupy residues S220 to Q232, A272 to L288, and T321 to S342. The Nuclear localization signal signature appears at K370–K380. Residues K417–F428 show a composition bias toward polar residues. Basic and acidic residues predominate over residues I527–Q536. The segment covering S542–D551 has biased composition (polar residues). An RNA-binding region spans residues L666–I687. The tract at residues R774–A804 is disordered. Residues P783–Q792 are compositionally biased toward pro residues.

In terms of tissue distribution, ubiquitous.

It localises to the cytoplasm. The protein resides in the nucleus. Its function is as follows. mRNA-binding protein that binds to the SECIS (selenocysteine insertion sequence) element present in the 3'-UTR of mRNAs encoding selenoproteins and facilitates the incorporation of the rare amino acid selenocysteine. Insertion of selenocysteine at UGA codons is mediated by SECISBP2 and EEFSEC: SECISBP2 (1) specifically binds the SECIS sequence once the 80S ribosome encounters an in-frame UGA codon and (2) contacts the RPS27A/eS31 of the 40S ribosome before ribosome stalling. (3) GTP-bound EEFSEC then delivers selenocysteinyl-tRNA(Sec) to the 80S ribosome and adopts a preaccommodated state conformation. (4) After GTP hydrolysis, EEFSEC dissociates from the assembly, selenocysteinyl-tRNA(Sec) accommodates, and peptide bond synthesis and selenoprotein elongation occur. The protein is Selenocysteine insertion sequence-binding protein 2 (Secisbp2) of Rattus norvegicus (Rat).